Consider the following 369-residue polypeptide: MSQWGPRAILVQTDSTNRNADGDWQAAVAIRGGGVVQLNMVNKRAVDFTPAECGDSEWAVGRVSLGLRMAMPRDFCAIIHAPAVSGPGPHVMLGLVDSGYRGTVLAVVVAPNGTRGFAPGALRVDVTFLDIRATPPTLTEPSSLHRFPQLAPSPLAGLREDPWLDGALATAGGAVALPARRRGGSLVYAGELTQVTTEHGDCVHEAPAFLPKREEDAGFDILIHRAVTVPANGATVIQPSLRVLRAADGPEACYVLGRSSLNARGLLVMPTRWPSGHACAFVVCNLTGVPVTLQAGSKVAQLLVAGTHALPWIPPDNIHEDGAFRAYPRGVPDATATPRDPPILVFTNEFDADAPPSKRGAGGFGSTGI.

Substrate is bound by residues 258 to 260 (RSS) and 364 to 365 (FG).

Belongs to the dUTPase family. The cofactor is Mg(2+).

It carries out the reaction dUTP + H2O = dUMP + diphosphate + H(+). Its function is as follows. Involved in nucleotide metabolism: produces dUMP, the immediate precursor of thymidine nucleotides and decreases the intracellular concentration of dUTP to avoid uracil incorporation into viral DNA. The sequence is that of Deoxyuridine 5'-triphosphate nucleotidohydrolase from Homo sapiens (Human).